We begin with the raw amino-acid sequence, 315 residues long: Putative olfactory receptor 2I1 (315 aa).

At 1-24 (MKANYSAEERFLLLGFSDWPSLQP) the chain is on the extracellular side. The helical transmembrane segment at 25 to 48 (VLFALVLLCYLLTLTGNSALVLLA) threads the bilayer. Over 49–56 (VRDPRLHT) the chain is Cytoplasmic. Residues 57–78 (PMYYFLCHLALVDAGFTTSVVP) form a helical membrane-spanning segment. Residues 79-99 (PLLANLRGPALWLPRSHCTAQ) lie on the Extracellular side of the membrane. Cysteines 96 and 188 form a disulfide. The chain crosses the membrane as a helical span at residues 100–119 (LCASLALGSAECVLLAVMAL). The Cytoplasmic portion of the chain corresponds to 120–138 (DRAAAVCRPLRYAGLVSPR). The chain crosses the membrane as a helical span at residues 139–157 (LCRTLASASWLSGLTNSVA). Over 158–195 (QTALLAERPLCAPRLLDHFICELPALLKLACGGDGDTT) the chain is Extracellular. The helical transmembrane segment at 196 to 219 (ENQMFAARVVILLLPFAVILASYG) threads the bilayer. The Cytoplasmic segment spans residues 220–236 (AVARAVCCMRFSGGRRR). A helical transmembrane segment spans residues 237 to 259 (AVGTCGSHLTAVCLFYGSAIYTY). Residues 260–272 (LQPAQRYNQARGK) lie on the Extracellular side of the membrane. Residues 273-292 (FVSLFYTVVTPALNPLIYTL) form a helical membrane-spanning segment. At 293–315 (RNKKVKGAARRLLRSLGRGQAGQ) the chain is on the cytoplasmic side.

Belongs to the G-protein coupled receptor 1 family.

The protein resides in the cell membrane. Functionally, odorant receptor. This Homo sapiens (Human) protein is Putative olfactory receptor 2I1.